The sequence spans 342 residues: Trans-3-hydroxy-L-proline dehydratase (342 aa).

The active-site Proton acceptor is the Ser90. Residues 91-92 (GS), Asp251, and 256-257 (GT) contribute to the substrate site.

Belongs to the proline racemase family.

The enzyme catalyses trans-3-hydroxy-L-proline = 1-pyrroline-2-carboxylate + H2O. Its function is as follows. Catalyzes the dehydration of trans-3-hydroxy-L-proline (t3LHyp) to Delta(1)-pyrroline-2-carboxylate (Pyr2C). Displays neither proline racemase activity nor 4-hydroxyproline 2-epimerase activity. The chain is Trans-3-hydroxy-L-proline dehydratase from Brucella suis biovar 1 (strain 1330).